The primary structure comprises 323 residues: tRNA dimethylallyltransferase (323 aa).

An ATP-binding site is contributed by 12–19; it reads GPTAAGKT. 14–19 is a binding site for substrate; sequence TAAGKT. Interaction with substrate tRNA regions lie at residues 37 to 40 and 161 to 165; these read DSAL and QRLIR.

It belongs to the IPP transferase family. As to quaternary structure, monomer. The cofactor is Mg(2+).

The catalysed reaction is adenosine(37) in tRNA + dimethylallyl diphosphate = N(6)-dimethylallyladenosine(37) in tRNA + diphosphate. Functionally, catalyzes the transfer of a dimethylallyl group onto the adenine at position 37 in tRNAs that read codons beginning with uridine, leading to the formation of N6-(dimethylallyl)adenosine (i(6)A). The sequence is that of tRNA dimethylallyltransferase from Pseudomonas putida (strain ATCC 47054 / DSM 6125 / CFBP 8728 / NCIMB 11950 / KT2440).